The chain runs to 206 residues: Small ribosomal subunit protein uS4 (206 aa).

An S4 RNA-binding domain is found at 96 to 156 (SRLDNVVYRM…EKSKKQVRIA (61 aa)).

Belongs to the universal ribosomal protein uS4 family. As to quaternary structure, part of the 30S ribosomal subunit. Contacts protein S5. The interaction surface between S4 and S5 is involved in control of translational fidelity.

In terms of biological role, one of the primary rRNA binding proteins, it binds directly to 16S rRNA where it nucleates assembly of the body of the 30S subunit. With S5 and S12 plays an important role in translational accuracy. This Laribacter hongkongensis (strain HLHK9) protein is Small ribosomal subunit protein uS4.